A 157-amino-acid chain; its full sequence is Crossover junction endodeoxyribonuclease RuvC (157 aa).

Catalysis depends on residues Asp-7, Glu-66, and Asp-139. Residues Asp-7, Glu-66, and Asp-139 each contribute to the Mg(2+) site.

Belongs to the RuvC family. Homodimer which binds Holliday junction (HJ) DNA. The HJ becomes 2-fold symmetrical on binding to RuvC with unstacked arms; it has a different conformation from HJ DNA in complex with RuvA. In the full resolvosome a probable DNA-RuvA(4)-RuvB(12)-RuvC(2) complex forms which resolves the HJ. Mg(2+) serves as cofactor.

It localises to the cytoplasm. It carries out the reaction Endonucleolytic cleavage at a junction such as a reciprocal single-stranded crossover between two homologous DNA duplexes (Holliday junction).. The RuvA-RuvB-RuvC complex processes Holliday junction (HJ) DNA during genetic recombination and DNA repair. Endonuclease that resolves HJ intermediates. Cleaves cruciform DNA by making single-stranded nicks across the HJ at symmetrical positions within the homologous arms, yielding a 5'-phosphate and a 3'-hydroxyl group; requires a central core of homology in the junction. The consensus cleavage sequence is 5'-(A/T)TT(C/G)-3'. Cleavage occurs on the 3'-side of the TT dinucleotide at the point of strand exchange. HJ branch migration catalyzed by RuvA-RuvB allows RuvC to scan DNA until it finds its consensus sequence, where it cleaves and resolves the cruciform DNA. In Helicobacter pylori (strain ATCC 700392 / 26695) (Campylobacter pylori), this protein is Crossover junction endodeoxyribonuclease RuvC.